The sequence spans 157 residues: Arginine repressor (157 aa).

The protein belongs to the ArgR family.

It is found in the cytoplasm. The protein operates within amino-acid biosynthesis; L-arginine biosynthesis [regulation]. In terms of biological role, regulates arginine biosynthesis genes. The sequence is that of Arginine repressor from Bacteroides fragilis (strain YCH46).